The sequence spans 984 residues: Serine/threonine-protein kinase N2 (984 aa).

Ser-21 carries the post-translational modification Phosphoserine. One can recognise an REM-1 1 domain in the interval 33-109 (KLDFSDTMVQ…LQELNAHIVV (77 aa)). At Lys-77 the chain carries N6-acetyllysine. The residue at position 110 (Ser-110) is a Phosphoserine. The disordered stretch occupies residues 114-133 (DITDCPRTPDTPNNDPRCST). Phosphothreonine occurs at positions 121 and 124. REM-1 domains lie at 121–203 (TPDT…TNEL) and 204–284 (AFDN…EVPK). Positions 123 to 133 (DTPNNDPRCST) are enriched in polar residues. A phosphoserine mark is found at Ser-302, Ser-306, Ser-360, and Ser-362. A disordered region spans residues 351-383 (ATSVALPGWSPSETRSSFMSRTSKSKSGSSRNL). Positions 353 to 473 (SVALPGWSPS…LYLEPQGTLF (121 aa)) constitute a C2 domain. Low complexity predominate over residues 364–381 (TRSSFMSRTSKSKSGSSR). Positions 382–463 (NLLKTDDLSN…FLDNQRHGMC (82 aa)) are necessary to rescue apical junction formation. A phosphoserine mark is found at Ser-535, Ser-583, and Ser-620. The tract at residues 558–584 (ASDSTVTKLDFDLEPEPPPAPPRASSL) is disordered. At Thr-628 the chain carries Phosphothreonine. Ser-631 bears the Phosphoserine mark. A Protein kinase domain is found at 657 to 916 (FRCCAVLGRG…AEDVKKHPFF (260 aa)). Residues 663–671 (LGRGHFGKV) and Lys-686 contribute to the ATP site. Residue Asp-782 is the Proton acceptor of the active site. Thr-816 is subject to Phosphothreonine; by PDPK1. The interval 917 to 977 (RLIDWSALMD…EEEQEMFRDF (61 aa)) is necessary for the catalytic activity. The region spanning 917–984 (RLIDWSALMD…RDFDYIADWC (68 aa)) is the AGC-kinase C-terminal domain. Residue Ser-952 is modified to Phosphoserine. Thr-958 bears the Phosphothreonine mark. Positions 978-984 (DYIADWC) are negatively regulates the responsiveness of the catalytic activity by cardiolipin and is required for optimal activation by the GTP-bound RhoA.

Belongs to the protein kinase superfamily. AGC Ser/Thr protein kinase family. PKC subfamily. In terms of assembly, interacts (via the REM repeats) with RHOA (GTP-bound form preferentially) and interacts (via the REM repeats) with RAC1 (GTP-bound form preferentially); the interactions induce its autophosphorylation. Interacts with RHOC. Interacts with NCK1 and NCK2. Interacts with NCK1 (via SH3 domains). Interacts with CD44. Interacts (via C-terminal kinase domain) with PDPK1; the interaction stimulates PDPK1 kinase activity. Interacts with MAP3K2; the interaction activates PRK2 kinase activity in a MAP3K2-independent kinase activity. Interacts (via C-terminal domain) with AKT1; the interaction occurs with the C-terminal cleavage product of PRK2 in apoptotic cells. Interacts (via C-terminus) with PTPN13 (via PDZ 3 domain). Interacts with CDK10. As to quaternary structure, (Microbial infection) Interacts with HCV NS5B (via N-terminal finger domain). Autophosphorylated. Phosphorylated during mitosis. Phosphorylated by CDK10. Post-translationally, activated by limited proteolysis with trypsin. Proteolytically cleaved by caspase-3 during the induction of apoptotic cell death. In terms of tissue distribution, ubiquitous. Expressed in numerous tumor cell lines, especially in bladder tumor cells.

The protein localises to the cytoplasm. Its subcellular location is the nucleus. The protein resides in the membrane. It is found in the cell projection. It localises to the lamellipodium. The protein localises to the cytoskeleton. Its subcellular location is the cleavage furrow. The protein resides in the midbody. It is found in the cell junction. It catalyses the reaction L-seryl-[protein] + ATP = O-phospho-L-seryl-[protein] + ADP + H(+). The catalysed reaction is L-threonyl-[protein] + ATP = O-phospho-L-threonyl-[protein] + ADP + H(+). Its activity is regulated as follows. Kinase activity is activated upon binding to GTP-bound Rhoa/Rac1 GTPases. Activated by caspase-3 (CASP3) cleavage during apoptosis. Activated by lipids, particularly cardiolipin and to a lesser extent by other acidic phospholipids and unsaturated fatty acids. Two specific sites, Thr-816 (activation loop of the kinase domain) and Thr-958 (turn motif), need to be phosphorylated for its full activation. Its function is as follows. PKC-related serine/threonine-protein kinase and Rho/Rac effector protein that participates in specific signal transduction responses in the cell. Plays a role in the regulation of cell cycle progression, actin cytoskeleton assembly, cell migration, cell adhesion, tumor cell invasion and transcription activation signaling processes. Phosphorylates CTTN in hyaluronan-induced astrocytes and hence decreases CTTN ability to associate with filamentous actin. Phosphorylates HDAC5, therefore lead to impair HDAC5 import. Direct RhoA target required for the regulation of the maturation of primordial junctions into apical junction formation in bronchial epithelial cells. Required for G2/M phases of the cell cycle progression and abscission during cytokinesis in a ECT2-dependent manner. Stimulates FYN kinase activity that is required for establishment of skin cell-cell adhesion during keratinocytes differentiation. Regulates epithelial bladder cells speed and direction of movement during cell migration and tumor cell invasion. Inhibits Akt pro-survival-induced kinase activity. Mediates Rho protein-induced transcriptional activation via the c-fos serum response factor (SRF). Involved in the negative regulation of ciliogenesis. In terms of biological role, (Microbial infection) Phosphorylates HCV NS5B leading to stimulation of HCV RNA replication. The polypeptide is Serine/threonine-protein kinase N2 (PKN2) (Homo sapiens (Human)).